The primary structure comprises 209 residues: Translation initiation factor IF-3 (209 aa).

This sequence belongs to the IF-3 family. Monomer.

It localises to the cytoplasm. In terms of biological role, IF-3 binds to the 30S ribosomal subunit and shifts the equilibrium between 70S ribosomes and their 50S and 30S subunits in favor of the free subunits, thus enhancing the availability of 30S subunits on which protein synthesis initiation begins. The chain is Translation initiation factor IF-3 from Chlorobium phaeovibrioides (strain DSM 265 / 1930) (Prosthecochloris vibrioformis (strain DSM 265)).